Consider the following 223-residue polypeptide: MTSEVIEDEKQFYSKAKTYWKQIPPTVDGMLGGYGHISNIDLNSSRKFLQRFLREGPNKTGTSCALDCGAGIGRITKRLLLPLFRVVDMVDVTEDFLAKAKTYLGEEGKRVRNYFCCGLQDFSPEPSSYDVIWIQWVIGHLTDQHLAEFLRRCRRGLRPNGIIVIKDNMAQEGVILDDVDSSVCRDLEVVRRIIRSAGLSLLAEERQENLPDEIYHVYSFALR.

At M1 the chain carries N-acetylmethionine. The residue at position 2 (T2) is an N-acetylthreonine; in N-terminal Xaa-Pro-Lys N-methyltransferase 1, N-terminally processed. Residues G69, R74, 91–93 (DVT), 119–120 (LQ), and Q135 each bind S-adenosyl-L-methionine.

It belongs to the methyltransferase superfamily. NTM1 family.

It is found in the nucleus. The catalysed reaction is N-terminal L-alanyl-L-prolyl-L-lysyl-[protein] + 3 S-adenosyl-L-methionine = N-terminal N,N,N-trimethyl-L-alanyl-L-prolyl-L-lysyl-[protein] + 3 S-adenosyl-L-homocysteine + 3 H(+). It catalyses the reaction N-terminal L-seryl-L-prolyl-L-lysyl-[protein] + 3 S-adenosyl-L-methionine = N-terminal N,N,N-trimethyl-L-seryl-L-prolyl-L-lysyl-[protein] + 3 S-adenosyl-L-homocysteine + 3 H(+). It carries out the reaction N-terminal L-prolyl-L-prolyl-L-lysyl-[protein] + 2 S-adenosyl-L-methionine = N-terminal N,N-dimethyl-L-prolyl-L-prolyl-L-lysyl-[protein] + 2 S-adenosyl-L-homocysteine + 2 H(+). Distributive alpha-N-methyltransferase that methylates the N-terminus of target proteins containing the N-terminal motif [Ala/Gly/Pro/Ser]-Pro-Lys when the initiator Met is cleaved. Specifically catalyzes mono-, di- or tri-methylation of the exposed alpha-amino group of the Ala, Gly or Ser residue in the [Ala/Gly/Ser]-Pro-Lys motif and mono- or di-methylation of Pro in the Pro-Pro-Lys motif. Some of the substrates may be primed by NTMT2-mediated monomethylation. Catalyzes the trimethylation of the N-terminal Gly in CENPA (after removal of Met-1). Responsible for the N-terminal methylation of KLHL31, MYL2, MYL3, RB1, RCC1, RPL23A and SET. Required during mitosis for normal bipolar spindle formation and chromosome segregation via its action on RCC1. This chain is N-terminal Xaa-Pro-Lys N-methyltransferase 1 (Ntmt1), found in Rattus norvegicus (Rat).